The sequence spans 236 residues: MPISVDKAVIARLKTHGETFEILVDPYLARDFKEGKDVPIEEILATPYVFKDAHKGDKASEHEMEKIFGTSDPYEVAKIILRKGEVQLTAEQRRQMLEDKKRYIATVIHRHAVDPRTGYPHPVDRILRAMEEAGVHIDIFKDAEAQVPQVIKAIRPILPLKLEVKVIAVKIPGDYVGRAYGEVRKFGNIKREEWGSDGSWMFVIEIPGGVEEEFYEKLNALTKGEAITKLLERKGL.

This sequence belongs to the SDO1/SBDS family. In terms of assembly, crystallized in association with 70S ribosomes.

The sequence is that of Ribosome maturation protein SDO1 homolog from Thermococcus kodakarensis (strain ATCC BAA-918 / JCM 12380 / KOD1) (Pyrococcus kodakaraensis (strain KOD1)).